The chain runs to 211 residues: MSAVKPLEAVARDRVGKGAARAVRRQGRVPAVIYGGGQSPQSISLDANQTHHLIYGGGFLTTVFEIEVGGRKIRAIPRDYQLDPVKDLPLHVDFLRVTAGQTVAVEVPVHFVNQDAAPGLKQKSGMLNVVHHTVALEVSPDAIPDAIDVDLTGKDIGDTIHVSDLALPAGASLALDPSETVATLVPPTVLPAAAEEAAVSEAAPAETTKEG.

This sequence belongs to the bacterial ribosomal protein bL25 family. CTC subfamily. Part of the 50S ribosomal subunit; part of the 5S rRNA/L5/L18/L25 subcomplex. Contacts the 5S rRNA. Binds to the 5S rRNA independently of L5 and L18.

Functionally, this is one of the proteins that binds to the 5S RNA in the ribosome where it forms part of the central protuberance. The chain is Large ribosomal subunit protein bL25 from Methylobacterium nodulans (strain LMG 21967 / CNCM I-2342 / ORS 2060).